The chain runs to 569 residues: uncharacterized protein (569 aa).

A helical transmembrane segment spans residues valine 2–tyrosine 22.

The protein resides in the membrane. This is an uncharacterized protein from Mycoplasma pneumoniae (strain ATCC 29342 / M129 / Subtype 1) (Mycoplasmoides pneumoniae).